Here is a 375-residue protein sequence, read N- to C-terminus: Alcohol dehydrogenase 1C (375 aa).

Position 2 is an N-acetylserine (Ser-2). Ser-23 is modified (phosphoserine). The Zn(2+) site is built by Cys-47, His-68, Cys-98, Cys-101, Cys-104, Cys-112, and Cys-175. Residues 200–205 (GLGGVG), Asp-224, Lys-229, Ile-270, 293–295 (VGV), 318–320 (AIF), and Arg-370 contribute to the NAD(+) site.

This sequence belongs to the zinc-containing alcohol dehydrogenase family. As to quaternary structure, dimer of identical or non-identical chains of class I alcohol dehydrogenase: ADH1A, ADH1B, and ADH1C. The cofactor is Zn(2+).

It is found in the cytoplasm. The catalysed reaction is a primary alcohol + NAD(+) = an aldehyde + NADH + H(+). It catalyses the reaction ethanol + NAD(+) = acetaldehyde + NADH + H(+). Its function is as follows. Alcohol dehydrogenase. Exhibits high activity for ethanol oxidation and plays a major role in ethanol catabolism. The protein is Alcohol dehydrogenase 1C (ADH1C) of Homo sapiens (Human).